The chain runs to 352 residues: tRNA (guanine(26)-N(2))-dimethyltransferase (352 aa).

In terms of domain architecture, Trm1 methyltransferase spans 4–350 (ILNKEGAVEF…ANYDEIARIL (347 aa)). Arg39, Arg65, Asp83, Asp109, and Ala110 together coordinate S-adenosyl-L-methionine.

This sequence belongs to the class I-like SAM-binding methyltransferase superfamily. Trm1 family.

The enzyme catalyses guanosine(26) in tRNA + 2 S-adenosyl-L-methionine = N(2)-dimethylguanosine(26) in tRNA + 2 S-adenosyl-L-homocysteine + 2 H(+). In terms of biological role, dimethylates a single guanine residue at position 26 of a number of tRNAs using S-adenosyl-L-methionine as donor of the methyl groups. The sequence is that of tRNA (guanine(26)-N(2))-dimethyltransferase from Pyrobaculum islandicum (strain DSM 4184 / JCM 9189 / GEO3).